A 269-amino-acid polypeptide reads, in one-letter code: Aquaporin-7 (269 aa).

Topologically, residues M1–E20 are cytoplasmic. S4 is modified (phosphoserine). A helical transmembrane segment spans residues F21–S38. Topologically, residues V39 to Y51 are extracellular. Residues L52 to A69 traverse the membrane as a helical segment. At G70–S73 the chain is on the cytoplasmic side. The discontinuously helical intramembrane region spans G74–A87. The NPA 1 motif lies at N78–A80. Residues L88 to K95 lie on the Cytoplasmic side of the membrane. Residues F96–L116 form a helical membrane-spanning segment. Residues I117–T151 lie on the Extracellular side of the membrane. A helical membrane pass occupies residues L152–A172. Residues I173–G184 lie on the Cytoplasmic side of the membrane. The chain crosses the membrane as a helical span at residues T185–L201. The Extracellular segment spans residues G202–T205. An intramembrane region (discontinuously helical) is located at residues G206–F219. The NPA 2 motif lies at N210–S212. Topologically, residues F220 to W237 are extracellular. Residues W238–L259 traverse the membrane as a helical segment. Residues I260–S269 lie on the Cytoplasmic side of the membrane.

This sequence belongs to the MIP/aquaporin (TC 1.A.8) family. As to quaternary structure, homotetramer; each monomer provides an independent glycerol/water pore. Two homotetramers on opposing membranes can dimerize, forming a cell-cell junction. Interacts with PLIN1. In terms of processing, phosphorylation by PKA could prevent the interaction with PLIN1. As to expression, detected in heart, kidney and testis.

The protein resides in the cell membrane. It is found in the cytoplasmic vesicle membrane. Its subcellular location is the lipid droplet. It carries out the reaction glycerol(in) = glycerol(out). The catalysed reaction is H2O(in) = H2O(out). It catalyses the reaction urea(in) = urea(out). Its activity is regulated as follows. Glycerol transport is regulated by pH, with the porin being permeable to glycerol at pH 7.4 but not at pH 5.5. Water permeability, however, is not influenced by pH. Not inhibited by mercury ions. Functionally, aquaglyceroporins form homotetrameric transmembrane channels, with each monomer independently mediating glycerol and water transport across the plasma membrane along their osmotic gradient. Could also be permeable to urea. Mediates the efflux of glycerol, formed upon triglyceride hydrolysis, to avoid its accumulation in adipocytes and to make it available to other tissues. In the kidney, mediates the reabsorption of glycerol, preventing its loss in urine, again participating to energy homeostasis. In pancreatic beta cells, it also mediates the efflux of glycerol, regulating its intracellular levels. The polypeptide is Aquaporin-7 (Rattus norvegicus (Rat)).